A 325-amino-acid polypeptide reads, in one-letter code: N-acetyl-gamma-glutamyl-phosphate reductase (325 aa).

Cys135 is an active-site residue.

Belongs to the NAGSA dehydrogenase family. Type 1 subfamily.

Its subcellular location is the cytoplasm. It catalyses the reaction N-acetyl-L-glutamate 5-semialdehyde + phosphate + NADP(+) = N-acetyl-L-glutamyl 5-phosphate + NADPH + H(+). It participates in amino-acid biosynthesis; L-arginine biosynthesis; N(2)-acetyl-L-ornithine from L-glutamate: step 3/4. Functionally, catalyzes the NADPH-dependent reduction of N-acetyl-5-glutamyl phosphate to yield N-acetyl-L-glutamate 5-semialdehyde. The protein is N-acetyl-gamma-glutamyl-phosphate reductase of Karelsulcia muelleri (strain GWSS) (Sulcia muelleri).